Consider the following 108-residue polypeptide: Structural protein 1 (108 aa).

Residues 1–77 lie on the Intravirion side of the membrane; it reads MSRVSEYGVP…LKMQMDRLCN (77 aa). The helical; Signal-anchor for type II membrane protein transmembrane segment at 78 to 98 threads the bilayer; it reads VLGVVLQMATLALVTYIAFVV. The Virion surface segment spans residues 99-108; it reads HTRATSCKRE.

Belongs to the varicellovirus ORF1 protein family. In terms of assembly, homodimer. Phosphorylated.

It localises to the virion membrane. The protein resides in the host Golgi apparatus membrane. This chain is Structural protein 1, found in Homo sapiens (Human).